The sequence spans 154 residues: Crossover junction endodeoxyribonuclease RuvC (154 aa).

Residues aspartate 7, glutamate 67, and aspartate 139 contribute to the active site. 3 residues coordinate Mg(2+): aspartate 7, glutamate 67, and aspartate 139.

The protein belongs to the RuvC family. Homodimer which binds Holliday junction (HJ) DNA. The HJ becomes 2-fold symmetrical on binding to RuvC with unstacked arms; it has a different conformation from HJ DNA in complex with RuvA. In the full resolvosome a probable DNA-RuvA(4)-RuvB(12)-RuvC(2) complex forms which resolves the HJ. It depends on Mg(2+) as a cofactor.

It localises to the cytoplasm. It catalyses the reaction Endonucleolytic cleavage at a junction such as a reciprocal single-stranded crossover between two homologous DNA duplexes (Holliday junction).. Its function is as follows. The RuvA-RuvB-RuvC complex processes Holliday junction (HJ) DNA during genetic recombination and DNA repair. Endonuclease that resolves HJ intermediates. Cleaves cruciform DNA by making single-stranded nicks across the HJ at symmetrical positions within the homologous arms, yielding a 5'-phosphate and a 3'-hydroxyl group; requires a central core of homology in the junction. The consensus cleavage sequence is 5'-(A/T)TT(C/G)-3'. Cleavage occurs on the 3'-side of the TT dinucleotide at the point of strand exchange. HJ branch migration catalyzed by RuvA-RuvB allows RuvC to scan DNA until it finds its consensus sequence, where it cleaves and resolves the cruciform DNA. The protein is Crossover junction endodeoxyribonuclease RuvC of Parasynechococcus marenigrum (strain WH8102).